The chain runs to 112 residues: Nitrogenase-stabilizing/protective protein NifW (112 aa).

This sequence belongs to the NifW family. As to quaternary structure, homotrimer; associates with NifD.

Its function is as follows. May protect the nitrogenase Fe-Mo protein from oxidative damage. The protein is Nitrogenase-stabilizing/protective protein NifW of Paraburkholderia xenovorans (strain LB400).